Consider the following 66-residue polypeptide: Large ribosomal subunit protein uL29 (66 aa).

This sequence belongs to the universal ribosomal protein uL29 family.

In Borrelia turicatae (strain 91E135), this protein is Large ribosomal subunit protein uL29.